The following is a 492-amino-acid chain: Putative protein disulfide-isomerase C1F5.02 (492 aa).

A signal peptide spans 1 to 22 (MKISNLLAAFLAFSGGFFCASA). Residues 23–128 (EVPKVNKEGL…LVKYMRKQLL (106 aa)) enclose the Thioredoxin 1 domain. Residues C51 and C54 each act as nucleophile in the active site. A disulfide bridge links C51 with C54. N161 and N257 each carry an N-linked (GlcNAc...) asparagine glycan. In terms of domain architecture, Thioredoxin 2 spans 323–462 (ELTAKAMTKF…LSAFIDKHAS (140 aa)). Catalysis depends on nucleophile residues C385 and C388. A disulfide bridge connects residues C385 and C388. A disordered region spans residues 468 to 492 (KEKESVPAPDLEDQVAVEDEMADEL). A compositionally biased stretch (acidic residues) spans 477-492 (DLEDQVAVEDEMADEL). Positions 489 to 492 (ADEL) match the Prevents secretion from ER motif.

Belongs to the protein disulfide isomerase family.

The protein resides in the endoplasmic reticulum lumen. The catalysed reaction is Catalyzes the rearrangement of -S-S- bonds in proteins.. Participates in the folding of proteins containing disulfide bonds, may be involved in glycosylation, prolyl hydroxylation and triglyceride transfer. The protein is Putative protein disulfide-isomerase C1F5.02 of Schizosaccharomyces pombe (strain 972 / ATCC 24843) (Fission yeast).